The chain runs to 352 residues: Replication factor C subunit 5 (352 aa).

The protein belongs to the activator 1 small subunits family. As to quaternary structure, heteropentamer of subunits rfc1, rfc2, rfc3, rfc4 and rfc5 that forms a complex with PCNA in the presence of ATP.

The protein localises to the nucleus. Functionally, the elongation of primed DNA templates by DNA polymerase delta and epsilon requires the action of the accessory proteins proliferating cell nuclear antigen (PCNA) and activator 1. The chain is Replication factor C subunit 5 from Neurospora crassa (strain ATCC 24698 / 74-OR23-1A / CBS 708.71 / DSM 1257 / FGSC 987).